We begin with the raw amino-acid sequence, 741 residues long: Melanoma-associated antigen D4 (741 aa).

The span at 1–13 (MAEGSFSVQSESY) shows a compositional bias: polar residues. Disordered regions lie at residues 1–27 (MAEGSFSVQSESYSVEDMDEGSDEVGE), 136–206 (RVAT…EGPS), 247–296 (MAFP…KALA), and 323–379 (PEGA…QPSL). Positions 14–27 (SVEDMDEGSDEVGE) are enriched in acidic residues. 2 stretches are compositionally biased toward polar residues: residues 140–151 (PQVSGEDTQPTT) and 187–196 (TSAQSQTGSP). Acidic residues predominate over residues 354–363 (DEYESSEEER). An MAGE domain is found at 413-611 (LQERANKLVK…REWKAHFLEA (199 aa)). The disordered stretch occupies residues 700 to 720 (VSSGTNGGASTSVLDGPSTSS). Polar residues predominate over residues 701-720 (SSGTNGGASTSVLDGPSTSS).

As to quaternary structure, interacts with TRIM27. In terms of tissue distribution, expressed only in brain and ovary among normal tissues. Isoform 1 and isoform 2 are specifically expressed in glioma cells among cancer cells. Detected in some renal cell carcinoma samples.

In terms of biological role, may enhance ubiquitin ligase activity of RING-type zinc finger-containing E3 ubiquitin-protein ligases. Proposed to act through recruitment and/or stabilization of the Ubl-conjugating enzyme (E2) at the E3:substrate complex. This Homo sapiens (Human) protein is Melanoma-associated antigen D4 (MAGED4).